Here is a 168-residue protein sequence, read N- to C-terminus: Skp-like protein (168 aa).

An N-terminal signal peptide occupies residues Met-1–Ala-22.

This sequence belongs to the Skp family.

This is Skp-like protein from Pseudomonas aeruginosa (strain ATCC 15692 / DSM 22644 / CIP 104116 / JCM 14847 / LMG 12228 / 1C / PRS 101 / PAO1).